The following is a 405-amino-acid chain: 2,3-diketo-5-methylthiopentyl-1-phosphate enolase (405 aa).

The active-site Proton acceptor is Lys91. Residues Lys140, 166 to 169 (KDDE), His257, Gly329, and 351 to 352 (GG) contribute to the substrate site. Lys166, Asp168, and Glu169 together coordinate Mg(2+). At Lys166 the chain carries N6-carboxylysine.

This sequence belongs to the RuBisCO large chain family. Type IV subfamily. As to quaternary structure, homodimer. The cofactor is Mg(2+).

It carries out the reaction 5-methylsulfanyl-2,3-dioxopentyl phosphate = 2-hydroxy-5-methylsulfanyl-3-oxopent-1-enyl phosphate. It participates in amino-acid biosynthesis; L-methionine biosynthesis via salvage pathway; L-methionine from S-methyl-5-thio-alpha-D-ribose 1-phosphate: step 3/6. In terms of biological role, catalyzes the enolization of 2,3-diketo-5-methylthiopentyl-1-phosphate (DK-MTP-1-P) into 2-hydroxy-3-keto-5-methylthiopentenyl-1-phosphate (HK-MTPenyl-1-P). The polypeptide is 2,3-diketo-5-methylthiopentyl-1-phosphate enolase (Bacillus licheniformis (strain ATCC 14580 / DSM 13 / JCM 2505 / CCUG 7422 / NBRC 12200 / NCIMB 9375 / NCTC 10341 / NRRL NRS-1264 / Gibson 46)).